The sequence spans 239 residues: Small ribosomal subunit protein uS3 (239 aa).

Residues 39-107 (VREFLRKKLA…ATSINIEEIR (69 aa)) form the KH type-2 domain. Positions 215–239 (TSNTNELSDEKRNRRKPRNANRRKE) are disordered. Residues 227–239 (NRRKPRNANRRKE) are compositionally biased toward basic residues.

Belongs to the universal ribosomal protein uS3 family. Part of the 30S ribosomal subunit. Forms a tight complex with proteins S10 and S14.

Binds the lower part of the 30S subunit head. Binds mRNA in the 70S ribosome, positioning it for translation. The chain is Small ribosomal subunit protein uS3 from Dichelobacter nodosus (strain VCS1703A).